Reading from the N-terminus, the 154-residue chain is SsrA-binding protein (154 aa).

Positions 134–154 (QREDLKRRAEDRDTQRELARF) are disordered.

This sequence belongs to the SmpB family.

It is found in the cytoplasm. Functionally, required for rescue of stalled ribosomes mediated by trans-translation. Binds to transfer-messenger RNA (tmRNA), required for stable association of tmRNA with ribosomes. tmRNA and SmpB together mimic tRNA shape, replacing the anticodon stem-loop with SmpB. tmRNA is encoded by the ssrA gene; the 2 termini fold to resemble tRNA(Ala) and it encodes a 'tag peptide', a short internal open reading frame. During trans-translation Ala-aminoacylated tmRNA acts like a tRNA, entering the A-site of stalled ribosomes, displacing the stalled mRNA. The ribosome then switches to translate the ORF on the tmRNA; the nascent peptide is terminated with the 'tag peptide' encoded by the tmRNA and targeted for degradation. The ribosome is freed to recommence translation, which seems to be the essential function of trans-translation. The protein is SsrA-binding protein of Nitratidesulfovibrio vulgaris (strain ATCC 29579 / DSM 644 / CCUG 34227 / NCIMB 8303 / VKM B-1760 / Hildenborough) (Desulfovibrio vulgaris).